The primary structure comprises 336 residues: Anthranilate phosphoribosyltransferase (336 aa).

5-phospho-alpha-D-ribose 1-diphosphate is bound by residues Gly82, 85–86, Thr90, 92–95, 110–118, and Ser122; these read GD, NIST, and KHGNRFASG. Gly82 provides a ligand contact to anthranilate. Ser94 lines the Mg(2+) pocket. Position 113 (Asn113) interacts with anthranilate. Position 168 (Arg168) interacts with anthranilate. Mg(2+) contacts are provided by Asp227 and Glu228.

It belongs to the anthranilate phosphoribosyltransferase family. As to quaternary structure, homodimer. Mg(2+) is required as a cofactor.

It carries out the reaction N-(5-phospho-beta-D-ribosyl)anthranilate + diphosphate = 5-phospho-alpha-D-ribose 1-diphosphate + anthranilate. It functions in the pathway amino-acid biosynthesis; L-tryptophan biosynthesis; L-tryptophan from chorismate: step 2/5. In terms of biological role, catalyzes the transfer of the phosphoribosyl group of 5-phosphorylribose-1-pyrophosphate (PRPP) to anthranilate to yield N-(5'-phosphoribosyl)-anthranilate (PRA). The sequence is that of Anthranilate phosphoribosyltransferase from Desulfitobacterium hafniense (strain DSM 10664 / DCB-2).